Reading from the N-terminus, the 301-residue chain is Rhodopsin (301 aa).

The Extracellular portion of the chain corresponds to 1–18 (LHMIHLHWYQYPPMNPMM). Residues 19-43 (YPLLLIFMFITGIPCLAGNFVTIWV) traverse the membrane as a helical segment. Over 44–55 (FMTTKSLRSPAN) the chain is Cytoplasmic. A helical membrane pass occupies residues 56-78 (LLVVNLAMSDFLMMFTMFPPMMI). Over 79–92 (TCYYHTWTLGPTFC) the chain is Extracellular. Cys92 and Cys169 form a disulfide bridge. Residues 93 to 115 (QVYAFLGNLFGCTSIWTMVFITF) form a helical membrane-spanning segment. Positions 116–118 (DRY) match the 'Ionic lock' involved in activated form stabilization motif. Residues 116–134 (DRYNVIVKGVAGEPLSNKK) are Cytoplasmic-facing. Residues 135 to 155 (AALWILSAWVLSFSWCSAPFF) traverse the membrane as a helical segment. At 156–182 (GWNRYVPEGNLTGCGTDYLSEDALSRS) the chain is on the extracellular side. Asn165 carries N-linked (GlcNAc...) asparagine glycosylation. The chain crosses the membrane as a helical span at residues 183–204 (YLYVYSVWVYFLPLLITIYCYV). Residues 205–245 (FIIKAVAAHEKGMRDQAKKMGIKSLRNEEAQKTSAECRLAK) lie on the Cytoplasmic side of the membrane. A helical transmembrane segment spans residues 246–267 (IAMTTVALWFIAWTPYLLINWV). The Extracellular portion of the chain corresponds to 268–278 (GMFARSYLSPV). The helical transmembrane segment at 279-300 (YTIWGYVFAKANAVYNPIVYAI) threads the bilayer. The residue at position 288 (Lys288) is an N6-(retinylidene)lysine.

This sequence belongs to the G-protein coupled receptor 1 family. Opsin subfamily. In terms of assembly, homodimer. Interacts with GNAQ. Contains one covalently linked retinal chromophore.

The protein resides in the cell projection. Its subcellular location is the rhabdomere membrane. In terms of biological role, photoreceptor required for image-forming vision at low light intensity. Can use both retinal and 3-dehydroretinal as visual pigment. Light-induced isomerization of 11-cis to all-trans retinal triggers a conformational change that activates signaling via G-proteins. Signaling via GNAQ probably mediates the activation of phospholipase C. This is Rhodopsin (RHO) from Cambarellus shufeldtii (Cajun dwarf crayfish).